The primary structure comprises 125 residues: Glycine cleavage system H protein 1 (125 aa).

The Lipoyl-binding domain maps to 22–103 (KAYIGITDYA…PYGSWLVAVR (82 aa)). An N6-lipoyllysine modification is found at Lys-63.

This sequence belongs to the GcvH family. As to quaternary structure, the glycine cleavage system is composed of four proteins: P, T, L and H. It depends on (R)-lipoate as a cofactor.

In terms of biological role, the glycine cleavage system catalyzes the degradation of glycine. The H protein shuttles the methylamine group of glycine from the P protein to the T protein. This is Glycine cleavage system H protein 1 from Caldanaerobacter subterraneus subsp. tengcongensis (strain DSM 15242 / JCM 11007 / NBRC 100824 / MB4) (Thermoanaerobacter tengcongensis).